Consider the following 359-residue polypeptide: Protein Wnt-8a (359 aa).

Positions 1–25 (MNPCQIFASLVMSICCHILSSTAWS) are cleaved as a signal peptide. Cys-55 and Cys-66 are joined by a disulfide. N-linked (GlcNAc...) asparagine glycosylation occurs at Asn-104. Disulfide bonds link Cys-105-Cys-113, Cys-115-Cys-133, Cys-181-Cys-195, Cys-183-Cys-190, Cys-260-Cys-298, Cys-276-Cys-291, Cys-295-Cys-337, Cys-313-Cys-328, Cys-315-Cys-325, and Cys-320-Cys-321. Residue Ser-187 is the site of O-palmitoleoyl serine attachment. Asn-263 and Asn-282 each carry an N-linked (GlcNAc...) asparagine glycan. Asn-348 is a glycosylation site (N-linked (GlcNAc...) asparagine).

It belongs to the Wnt family. Post-translationally, palmitoleoylation is required for efficient binding to frizzled receptors. Depalmitoleoylation leads to Wnt signaling pathway inhibition. Proteolytic processing by tiki1 and tiki2 promotes oxidation and formation of large disulfide-bond oligomers, leading to inactivation of wnt8. As to expression, expressed in the margin of the pregastrula embryo destined to be the future mesoderm.

Its subcellular location is the secreted. It localises to the extracellular space. The protein localises to the extracellular matrix. In terms of biological role, ligand for members of the frizzled family of seven transmembrane receptors. Required for mesoderm and neural ectoderm patterning during gastrulation. Involved in axis formation during embryonic development, via activation of canonical Wnt/CTNNB1 signaling. May be involved in the specification of the spatial patterns of expression of Gsc and other regulatory genes leading to the establishment of the embryonic axis. The protein is Protein Wnt-8a (wnt8a) of Danio rerio (Zebrafish).